The sequence spans 502 residues: mRNA cap guanine-N(7) methyltransferase (502 aa).

Residues 1-118 (MADENPQAQG…SQQEEAMRFS (118 aa)) are disordered. Basic and acidic residues predominate over residues 93 to 115 (LVDRETLRRRQEERERSQQEEAM). The mRNA cap 0 methyltransferase domain maps to 146-502 (SKIKGLRSFN…FYHAFCFYKV (357 aa)). Residue 155 to 156 (NN) coordinates mRNA. Residues Lys-159, Gly-202, Asp-226, Asp-264, 307-309 (MFT), and Tyr-312 contribute to the S-adenosyl-L-methionine site. Basic and acidic residues predominate over residues 360-369 (ERETAAKKEE). The segment at 360-381 (ERETAAKKEEAEPEDGEVEEDD) is disordered. Residues 370–381 (AEPEDGEVEEDD) are compositionally biased toward acidic residues.

Belongs to the class I-like SAM-binding methyltransferase superfamily. mRNA cap 0 methyltransferase family.

The protein localises to the nucleus. It carries out the reaction a 5'-end (5'-triphosphoguanosine)-ribonucleoside in mRNA + S-adenosyl-L-methionine = a 5'-end (N(7)-methyl 5'-triphosphoguanosine)-ribonucleoside in mRNA + S-adenosyl-L-homocysteine. Responsible for methylating the 5'-cap structure of mRNAs. The protein is mRNA cap guanine-N(7) methyltransferase (abd1) of Aspergillus oryzae (strain ATCC 42149 / RIB 40) (Yellow koji mold).